The chain runs to 139 residues: NADPH-dependent 7-cyano-7-deazaguanine reductase (139 aa).

Catalysis depends on C34, which acts as the Thioimide intermediate. Catalysis depends on D41, which acts as the Proton donor. Residues 56–58 (VEL) and 75–76 (HE) each bind substrate.

This sequence belongs to the GTP cyclohydrolase I family. QueF type 1 subfamily.

It is found in the cytoplasm. The catalysed reaction is 7-aminomethyl-7-carbaguanine + 2 NADP(+) = 7-cyano-7-deazaguanine + 2 NADPH + 3 H(+). The protein operates within tRNA modification; tRNA-queuosine biosynthesis. Its function is as follows. Catalyzes the NADPH-dependent reduction of 7-cyano-7-deazaguanine (preQ0) to 7-aminomethyl-7-deazaguanine (preQ1). In Methylobacillus flagellatus (strain ATCC 51484 / DSM 6875 / VKM B-1610 / KT), this protein is NADPH-dependent 7-cyano-7-deazaguanine reductase.